A 62-amino-acid chain; its full sequence is Large ribosomal subunit protein bL28 (62 aa).

Belongs to the bacterial ribosomal protein bL28 family.

This is Large ribosomal subunit protein bL28 from Frankia casuarinae (strain DSM 45818 / CECT 9043 / HFP020203 / CcI3).